A 136-amino-acid polypeptide reads, in one-letter code: Large ribosomal subunit protein bL17 (136 aa).

Belongs to the bacterial ribosomal protein bL17 family. As to quaternary structure, part of the 50S ribosomal subunit. Contacts protein L32.

This is Large ribosomal subunit protein bL17 from Methylobacterium radiotolerans (strain ATCC 27329 / DSM 1819 / JCM 2831 / NBRC 15690 / NCIMB 10815 / 0-1).